Here is a 497-residue protein sequence, read N- to C-terminus: Probable polyamine oxidase 4 (497 aa).

Residues Glu58, Arg66, Val247, and Glu435 each contribute to the FAD site. Residues 495–497 (SRM) carry the Microbody targeting signal motif.

It belongs to the flavin monoamine oxidase family. FAD is required as a cofactor. In terms of tissue distribution, highly expressed in roots, flowers and greening cotelydons. Lower expression in other tissues.

The protein localises to the peroxisome. The catalysed reaction is spermine + O2 + H2O = 3-aminopropanal + spermidine + H2O2. It catalyses the reaction spermidine + O2 + H2O = 3-aminopropanal + putrescine + H2O2. The protein operates within amine and polyamine degradation; spermine degradation. It participates in amine and polyamine degradation; spermidine degradation. In terms of biological role, flavoenzyme involved in polyamine back-conversion. Catalyzes the oxidation of the secondary amino group of polyamines, such as spermine and spermidine. Substrate preference is spermine &gt; spermidine. No activity detected when putrescine or N(1)-acetylspermine are used as substrates. Plays an important role in the regulation of polyamine intracellular concentration. The protein is Probable polyamine oxidase 4 (PAO4) of Arabidopsis thaliana (Mouse-ear cress).